Reading from the N-terminus, the 265-residue chain is Glutamate racemase (265 aa).

Substrate contacts are provided by residues 12–13 (DS) and 44–45 (YG). C75 serves as the catalytic Proton donor/acceptor. 76–77 (NT) is a binding site for substrate. The active-site Proton donor/acceptor is the C186. Substrate is bound at residue 187–188 (TH).

The protein belongs to the aspartate/glutamate racemases family.

The catalysed reaction is L-glutamate = D-glutamate. It participates in cell wall biogenesis; peptidoglycan biosynthesis. Provides the (R)-glutamate required for cell wall biosynthesis. This Pseudomonas paraeruginosa (strain DSM 24068 / PA7) (Pseudomonas aeruginosa (strain PA7)) protein is Glutamate racemase.